Reading from the N-terminus, the 267-residue chain is Small ribosomal subunit protein uS2 (267 aa).

A disordered region spans residues 224 to 267 (GRQGEDQVDEKTFEGQKSEAAEGDKKTADNSMEDIVNAVEGDNK). The span at 225 to 251 (RQGEDQVDEKTFEGQKSEAAEGDKKTA) shows a compositional bias: basic and acidic residues.

This sequence belongs to the universal ribosomal protein uS2 family.

The polypeptide is Small ribosomal subunit protein uS2 (Levilactobacillus brevis (strain ATCC 367 / BCRC 12310 / CIP 105137 / JCM 1170 / LMG 11437 / NCIMB 947 / NCTC 947) (Lactobacillus brevis)).